A 231-amino-acid chain; its full sequence is Uracil phosphoribosyltransferase (231 aa).

Position 38–42 (38–42) interacts with GTP; the sequence is KGLVR. 5-phospho-alpha-D-ribose 1-diphosphate contacts are provided by residues Arg-87, Arg-112, and 140-148; that span reads DPMIATGST. Residues Ile-203 and 208-210 contribute to the uracil site; that span reads GDA. Position 209 (Asp-209) interacts with 5-phospho-alpha-D-ribose 1-diphosphate.

Belongs to the UPRTase family. Mg(2+) is required as a cofactor.

The enzyme catalyses UMP + diphosphate = 5-phospho-alpha-D-ribose 1-diphosphate + uracil. The protein operates within pyrimidine metabolism; UMP biosynthesis via salvage pathway; UMP from uracil: step 1/1. Allosterically activated by GTP. Its function is as follows. Catalyzes the conversion of uracil and 5-phospho-alpha-D-ribose 1-diphosphate (PRPP) to UMP and diphosphate. The polypeptide is Uracil phosphoribosyltransferase (Methanococcus maripaludis (strain DSM 14266 / JCM 13030 / NBRC 101832 / S2 / LL)).